Reading from the N-terminus, the 432-residue chain is Adenylosuccinate synthetase (432 aa).

GTP contacts are provided by residues 13 to 19 and 41 to 43; these read GDEGKGK and GHT. Asp-14 acts as the Proton acceptor in catalysis. Residues Asp-14 and Gly-41 each contribute to the Mg(2+) site. IMP is bound by residues 14-17, 39-42, Thr-130, Arg-144, Gln-225, Thr-240, and Arg-306; these read DEGK and NAGH. The Proton donor role is filled by His-42. Position 302 to 308 (302 to 308) interacts with substrate; that stretch reads TVTGRAR. Residues Arg-308, 334–336, and 416–418 each bind GTP; these read KLD and STG.

The protein belongs to the adenylosuccinate synthetase family. In terms of assembly, homodimer. Requires Mg(2+) as cofactor.

The protein localises to the cytoplasm. It catalyses the reaction IMP + L-aspartate + GTP = N(6)-(1,2-dicarboxyethyl)-AMP + GDP + phosphate + 2 H(+). Its pathway is purine metabolism; AMP biosynthesis via de novo pathway; AMP from IMP: step 1/2. In terms of biological role, plays an important role in the de novo pathway of purine nucleotide biosynthesis. Catalyzes the first committed step in the biosynthesis of AMP from IMP. This is Adenylosuccinate synthetase from Herminiimonas arsenicoxydans.